The sequence spans 352 residues: Chorismate synthase (352 aa).

Arg48 lines the NADP(+) pocket. FMN is bound by residues 125–127 (RSS), 237–238 (NA), Gly278, 293–297 (KPTSS), and Arg319.

Belongs to the chorismate synthase family. As to quaternary structure, homotetramer. FMNH2 serves as cofactor.

The catalysed reaction is 5-O-(1-carboxyvinyl)-3-phosphoshikimate = chorismate + phosphate. Its pathway is metabolic intermediate biosynthesis; chorismate biosynthesis; chorismate from D-erythrose 4-phosphate and phosphoenolpyruvate: step 7/7. Functionally, catalyzes the anti-1,4-elimination of the C-3 phosphate and the C-6 proR hydrogen from 5-enolpyruvylshikimate-3-phosphate (EPSP) to yield chorismate, which is the branch point compound that serves as the starting substrate for the three terminal pathways of aromatic amino acid biosynthesis. This reaction introduces a second double bond into the aromatic ring system. In Francisella tularensis subsp. mediasiatica (strain FSC147), this protein is Chorismate synthase.